An 82-amino-acid polypeptide reads, in one-letter code: Modifier of protein aggregation 4 (82 aa).

A compositionally biased stretch (basic and acidic residues) spans 1–23 (MTRGNQRDLAREKNQKKLADQKK). Disordered regions lie at residues 1–41 (MTRG…MDAR) and 63–82 (EAAAAAANAKKVAKVDPLKM).

The protein belongs to the SERF family.

Its subcellular location is the cytoplasm. It is found in the cytosol. The protein localises to the nucleus. Its function is as follows. Positive regulator of protein aggregation and age-related proteotoxicity. Induces conformational changes in aggregation-prone proteins, driving them into compact formations preceding the formation of aggregates. The sequence is that of Modifier of protein aggregation 4 from Caenorhabditis elegans.